We begin with the raw amino-acid sequence, 68 residues long: Large ribosomal subunit protein uL29 (68 aa).

Belongs to the universal ribosomal protein uL29 family.

In Leuconostoc citreum (strain KM20), this protein is Large ribosomal subunit protein uL29.